The primary structure comprises 186 residues: MILSDGLIKELISYRALVIEPLSETQIQPSSVDLTLGSTFLAIDNINVPFLDPKRKETIKYREIHIEKGGQLILQPGFFLLGTTTERLMLPNFLVARVEGRSSLGRMGILIHATAGYVDPGFCGQITLEISNVNNIPVALYPGMRICQVSFELLFENCVIPYGLKGKYQGQEGPEGTRIFLDFLKE.

Residues 101-106, aspartate 119, 127-129, glutamine 148, tyrosine 162, and glutamine 171 contribute to the dCTP site; these read RSSLGR and TLE. Glutamate 129 acts as the Proton donor/acceptor in catalysis.

Belongs to the dCTP deaminase family. In terms of assembly, homotrimer.

It catalyses the reaction dCTP + 2 H2O = dUMP + NH4(+) + diphosphate. Its pathway is pyrimidine metabolism; dUMP biosynthesis; dUMP from dCTP: step 1/1. In terms of biological role, bifunctional enzyme that catalyzes both the deamination of dCTP to dUTP and the hydrolysis of dUTP to dUMP without releasing the toxic dUTP intermediate. The polypeptide is dCTP deaminase, dUMP-forming (Coprothermobacter proteolyticus (strain ATCC 35245 / DSM 5265 / OCM 4 / BT)).